Consider the following 278-residue polypeptide: Pantothenate synthetase (278 aa).

28–35 (MGNLHAGH) provides a ligand contact to ATP. The active-site Proton donor is the His35. Position 59 (Gln59) interacts with (R)-pantoate. Gln59 lines the beta-alanine pocket. 145–148 (GKKD) contacts ATP. A (R)-pantoate-binding site is contributed by Gln151. Residue 182–185 (LSSR) participates in ATP binding.

This sequence belongs to the pantothenate synthetase family. Homodimer.

It is found in the cytoplasm. It carries out the reaction (R)-pantoate + beta-alanine + ATP = (R)-pantothenate + AMP + diphosphate + H(+). It functions in the pathway cofactor biosynthesis; (R)-pantothenate biosynthesis; (R)-pantothenate from (R)-pantoate and beta-alanine: step 1/1. In terms of biological role, catalyzes the condensation of pantoate with beta-alanine in an ATP-dependent reaction via a pantoyl-adenylate intermediate. The chain is Pantothenate synthetase from Methylobacillus flagellatus (strain ATCC 51484 / DSM 6875 / VKM B-1610 / KT).